We begin with the raw amino-acid sequence, 151 residues long: Large ribosomal subunit protein bL9 (151 aa).

This sequence belongs to the bacterial ribosomal protein bL9 family.

In terms of biological role, binds to the 23S rRNA. This is Large ribosomal subunit protein bL9 from Oenococcus oeni (strain ATCC BAA-331 / PSU-1).